A 389-amino-acid chain; its full sequence is MQLQPAGTGNMASAAAAALVSWGFLDYKTEKYVLTRNCRVGVSQRLLQLAVVVYVIGWALLAKKGYQERDLAPQTSVITKLKGVSVTQVKELENRLWDVADFVKPSQGENVFFLVTNFLVTPAQVQGRCPEHPSVPLANCWADEDCPEGETGTYSHGIKTGQCVVFNGTHRTCEIWSWCPVESGAVPRKPLLAQAKNFTLFIKNTVTFSKFNFSRSNALLTWDNTYFKHCLYDPLSSPYCPVFRIGDLVAMAGGDFEDLALLGGAVGISIHWDCNLDTKGSDCCPQYSFQLQQKGYNFRTANHWWAASGVETRSLLKLYGIRFDILVTGQAGKFALIPTAITVGTGAAWLGMVTFLCDLLLLYVDREAGFYWRTKYEEARAPKTTTNSS.

Over 1 to 45 the chain is Cytoplasmic; sequence MQLQPAGTGNMASAAAAALVSWGFLDYKTEKYVLTRNCRVGVSQR. The helical transmembrane segment at 46–66 threads the bilayer; sequence LLQLAVVVYVIGWALLAKKGY. Residues 67 to 335 are Extracellular-facing; the sequence is QERDLAPQTS…LVTGQAGKFA (269 aa). Intrachain disulfides connect Cys-129–Cys-179, Cys-140–Cys-163, and Cys-146–Cys-173. N-linked (GlcNAc...) asparagine glycans are attached at residues Asn-167, Asn-197, and Asn-212. Intrachain disulfides connect Cys-230–Cys-240 and Cys-274–Cys-283. The helical transmembrane segment at 336-356 threads the bilayer; sequence LIPTAITVGTGAAWLGMVTFL. At 357 to 389 the chain is on the cytoplasmic side; it reads CDLLLLYVDREAGFYWRTKYEEARAPKTTTNSS.

The protein belongs to the P2X receptor family. As to quaternary structure, unlike most P2RXs, P2RX6 does not seem to form homotrimers. P2RX6 are likely to form as obligate heteromers with other P2RXs subunits. Forms heterotrimer with P2RX2 with a variable subunit stoichiometry determined by subunit expression levels. Forms heterotrimer with P2RX4; functional differences between homomeric P2RX4 and P2RX4/6 heterotrimer are minor. Forms a P2RX2/P2RX4/P2RX6 heterotrimer. Interacts with SF3A1; resulting in a reduction of the splicing activity. N-glycosylated. N-linked glycosylation can affect trafficking to the membrane and function. As to expression, predominantly expressed in skeletal muscle. Also expressed in lung.

It is found in the cell membrane. Its subcellular location is the endoplasmic reticulum. The protein localises to the nucleus. The protein resides in the nucleus inner membrane. The enzyme catalyses Ca(2+)(in) = Ca(2+)(out). Its function is as follows. Acts as a modulatory subunit rather than a functional channel. Unlike other P2XRs members, P2RX6 does not seem to form functional homotrimers. P2RX6 requires the presence of P2RX4 or P2RX2 to form functional heterotrimeric receptors at the plasma membrane. P2RX6 can be translocated to the nucleus, where it interacts with the splicing factor (SF3A1), to reduce the incidence of mRNA splicing. May function as a nuclear regulator of post-transcriptional modifications in neurons. The protein is P2X purinoceptor 6 (P2rx6) of Mus musculus (Mouse).